A 161-amino-acid polypeptide reads, in one-letter code: Endoribonuclease YbeY (161 aa).

The Zn(2+) site is built by histidine 121, histidine 125, and histidine 131.

The protein belongs to the endoribonuclease YbeY family. Zn(2+) is required as a cofactor.

The protein localises to the cytoplasm. Its function is as follows. Single strand-specific metallo-endoribonuclease involved in late-stage 70S ribosome quality control and in maturation of the 3' terminus of the 16S rRNA. The polypeptide is Endoribonuclease YbeY (Xanthomonas axonopodis pv. citri (strain 306)).